A 225-amino-acid chain; its full sequence is Two-component response regulator PhoP (225 aa).

One can recognise a Response regulatory domain in the interval 2–116; sequence KLLVVEDEAL…ELEARLNALL (115 aa). Asp51 is modified (4-aspartylphosphate). The segment at residues 124-222 is a DNA-binding region (ompR/PhoB-type); sequence QSTIEAGPLV…VRGQGYLFTE (99 aa).

Functionally, member of the two-component regulatory system PhoP/PhoQ that plays a role in the regulation of resistance towards polymyxin B and cationic antimicrobial peptides in response to limiting concentrations of Mg(2+). Functions as a transcriptional activator by direct binding to a cis-acting sequence upstream of the target gene promoters including oprH and pmrH promoters. This chain is Two-component response regulator PhoP (phoP), found in Pseudomonas aeruginosa (strain ATCC 15692 / DSM 22644 / CIP 104116 / JCM 14847 / LMG 12228 / 1C / PRS 101 / PAO1).